A 199-amino-acid chain; its full sequence is Potassium-transporting ATPase KdpC subunit (199 aa).

Residues 7 to 27 (PAIVLLLALTLLTGLAYPLAM) form a helical membrane-spanning segment. A disordered region spans residues 67 to 86 (HGRPSATTAADPQDSSKTVP). Residues 71-84 (SATTAADPQDSSKT) show a composition bias toward polar residues.

This sequence belongs to the KdpC family. In terms of assembly, the system is composed of three essential subunits: KdpA, KdpB and KdpC.

Its subcellular location is the cell inner membrane. In terms of biological role, part of the high-affinity ATP-driven potassium transport (or Kdp) system, which catalyzes the hydrolysis of ATP coupled with the electrogenic transport of potassium into the cytoplasm. This subunit acts as a catalytic chaperone that increases the ATP-binding affinity of the ATP-hydrolyzing subunit KdpB by the formation of a transient KdpB/KdpC/ATP ternary complex. The sequence is that of Potassium-transporting ATPase KdpC subunit from Rhodopseudomonas palustris (strain BisB18).